The sequence spans 139 residues: Transcription antitermination protein NusB (139 aa).

The protein belongs to the NusB family.

In terms of biological role, involved in transcription antitermination. Required for transcription of ribosomal RNA (rRNA) genes. Binds specifically to the boxA antiterminator sequence of the ribosomal RNA (rrn) operons. This chain is Transcription antitermination protein NusB, found in Baumannia cicadellinicola subsp. Homalodisca coagulata.